Reading from the N-terminus, the 428-residue chain is 3-phosphoshikimate 1-carboxyvinyltransferase (428 aa).

3-phosphoshikimate-binding residues include Lys21, Ser22, and Arg26. Residue Lys21 participates in phosphoenolpyruvate binding. The phosphoenolpyruvate site is built by Gly93 and Arg121. 4 residues coordinate 3-phosphoshikimate: Ser166, Gln168, Asp314, and Lys341. A phosphoenolpyruvate-binding site is contributed by Gln168. Catalysis depends on Asp314, which acts as the Proton acceptor. 2 residues coordinate phosphoenolpyruvate: Arg345 and Arg388.

Belongs to the EPSP synthase family. In terms of assembly, monomer.

The protein resides in the cytoplasm. The enzyme catalyses 3-phosphoshikimate + phosphoenolpyruvate = 5-O-(1-carboxyvinyl)-3-phosphoshikimate + phosphate. The protein operates within metabolic intermediate biosynthesis; chorismate biosynthesis; chorismate from D-erythrose 4-phosphate and phosphoenolpyruvate: step 6/7. Catalyzes the transfer of the enolpyruvyl moiety of phosphoenolpyruvate (PEP) to the 5-hydroxyl of shikimate-3-phosphate (S3P) to produce enolpyruvyl shikimate-3-phosphate and inorganic phosphate. This Syntrophomonas wolfei subsp. wolfei (strain DSM 2245B / Goettingen) protein is 3-phosphoshikimate 1-carboxyvinyltransferase.